Consider the following 645-residue polypeptide: 1-deoxy-D-xylulose-5-phosphate synthase 1 (645 aa).

Thiamine diphosphate contacts are provided by residues His79 and 120–122 (GHS). Asp151 lines the Mg(2+) pocket. Residues 152–153 (GS), Asn180, Tyr291, and Glu373 each bind thiamine diphosphate. Residue Asn180 participates in Mg(2+) binding.

The protein belongs to the transketolase family. DXPS subfamily. In terms of assembly, homodimer. The cofactor is Mg(2+). Thiamine diphosphate serves as cofactor.

The enzyme catalyses D-glyceraldehyde 3-phosphate + pyruvate + H(+) = 1-deoxy-D-xylulose 5-phosphate + CO2. The protein operates within metabolic intermediate biosynthesis; 1-deoxy-D-xylulose 5-phosphate biosynthesis; 1-deoxy-D-xylulose 5-phosphate from D-glyceraldehyde 3-phosphate and pyruvate: step 1/1. Catalyzes the acyloin condensation reaction between C atoms 2 and 3 of pyruvate and glyceraldehyde 3-phosphate to yield 1-deoxy-D-xylulose-5-phosphate (DXP). The chain is 1-deoxy-D-xylulose-5-phosphate synthase 1 from Rhodospirillum rubrum (strain ATCC 11170 / ATH 1.1.1 / DSM 467 / LMG 4362 / NCIMB 8255 / S1).